Reading from the N-terminus, the 310-residue chain is Glutamyl-Q tRNA(Asp) synthetase (310 aa).

Residues 24-28 (RFAPS) and Glu60 contribute to the L-glutamate site. Positions 27-37 (PSPSGPLHFGS) match the 'HIGH' region motif. 4 residues coordinate Zn(2+): Cys116, Cys118, Tyr130, and Cys134. 2 residues coordinate L-glutamate: Tyr187 and Arg205. The 'KMSKS' region motif lies at 243–247 (KLSKQ). Lys246 contributes to the ATP binding site.

The protein belongs to the class-I aminoacyl-tRNA synthetase family. GluQ subfamily. Requires Zn(2+) as cofactor.

Catalyzes the tRNA-independent activation of glutamate in presence of ATP and the subsequent transfer of glutamate onto a tRNA(Asp). Glutamate is transferred on the 2-amino-5-(4,5-dihydroxy-2-cyclopenten-1-yl) moiety of the queuosine in the wobble position of the QUC anticodon. In Photobacterium profundum (strain SS9), this protein is Glutamyl-Q tRNA(Asp) synthetase.